A 184-amino-acid chain; its full sequence is Photosystem I assembly protein Ycf4 (184 aa).

2 helical membrane passes run 22–42 and 57–77; these read FFWACILFLGSLGFLVVGTSS and ISFFPQGIVMSFYGIAGLFIS.

It belongs to the Ycf4 family.

The protein resides in the plastid. It is found in the chloroplast thylakoid membrane. In terms of biological role, seems to be required for the assembly of the photosystem I complex. The polypeptide is Photosystem I assembly protein Ycf4 (Lemna minor (Common duckweed)).